The chain runs to 283 residues: Calpastatin (283 aa).

Over residues 1–15 the composition is skewed to polar residues; that stretch reads MNPTETKAIPVSQQM. 2 disordered regions span residues 1–186 and 212–283; these read MNPT…SDPM and NEGI…KVEK. Positions 21-30 are enriched in basic residues; that stretch reads PNKKKHKKQA. A Glycyl lysine isopeptide (Lys-Gly) (interchain with G-Cter in SUMO2) cross-link involves residue K32. The span at 46-65 shows a compositional bias: basic and acidic residues; it reads VVHEKKSQEGKPKEHTEQKS. K50 carries the post-translational modification N6-acetyllysine. Residue S87 is modified to Phosphoserine. A compositionally biased stretch (low complexity) spans 107–122; that stretch reads VSAGGESVAGVAATSG. S133 bears the Phosphoserine mark. The residue at position 135 (T135) is a Phosphothreonine. The stretch at 170–222 is one Inhibitory domain 1 repeat; the sequence is IEEENTTYTGPEVSDPMSSTYIEELGKREVTIPPKYRELLAKNEGITGPPADS. Phosphoserine occurs at positions 222 and 243. Positions 249 to 258 are enriched in basic and acidic residues; that stretch reads KKTEKEESTE.

The protein belongs to the protease inhibitor I27 (calpastatin) family.

Its function is as follows. Specific inhibition of calpain (calcium-dependent cysteine protease). Plays a key role in postmortem tenderization of meat and have been proposed to be involved in muscle protein degradation in living tissue. The polypeptide is Calpastatin (CAST) (Chlorocebus aethiops (Green monkey)).